The sequence spans 228 residues: Thymidine kinase (228 aa).

23–30 lines the ATP pocket; the sequence is GNIGCGKS. Glu-50 functions as the Proton acceptor in the catalytic mechanism. Substrate is bound by residues Tyr-68, Gln-79, and Phe-109. Arg-157 provides a ligand contact to ATP.

It belongs to the DCK/DGK family.

It catalyses the reaction thymidine + ATP = dTMP + ADP + H(+). The chain is Thymidine kinase (TK) from Ictaluridae (bullhead catfishes).